The primary structure comprises 85 residues: MEAGERIDASQLPHRVLETRGHAISILFGFWTSFICDTYIVLAWISKIKGSPDVSASSDEPYARIQQSRRQCHAEEDQSQVPEAG.

The helical transmembrane segment at 21 to 43 threads the bilayer; that stretch reads GHAISILFGFWTSFICDTYIVLA. Positions 51–85 are disordered; the sequence is SPDVSASSDEPYARIQQSRRQCHAEEDQSQVPEAG.

The protein resides in the membrane. The sequence is that of Small integral membrane protein 2 (SMIM2) from Homo sapiens (Human).